Reading from the N-terminus, the 353-residue chain is Rhodopsin (353 aa).

At 1-36 the chain is on the extracellular side; it reads MNGTEGPYFYIPMVNTTGIVRSPYEYPQYYLVNPAA. 2 N-linked (GlcNAc...) asparagine glycosylation sites follow: asparagine 2 and asparagine 15. The chain crosses the membrane as a helical span at residues 37–61; that stretch reads YAALGAYMFLLILVGFPVNFLTLYV. The Cytoplasmic portion of the chain corresponds to 62-73; the sequence is TLEHKKLRTPLN. A helical membrane pass occupies residues 74-96; it reads YILLNLAVADLFMVLGGFTTTMY. Residues 97-110 lie on the Extracellular side of the membrane; sequence TSMHGYFVLGRLGC. Cysteine 110 and cysteine 187 are oxidised to a cystine. A helical transmembrane segment spans residues 111–133; sequence NVEGFFATLGGEIALWSLVVLAI. A 'Ionic lock' involved in activated form stabilization motif is present at residues 134–136; it reads ERW. The Cytoplasmic portion of the chain corresponds to 134–152; sequence ERWVVVCKPISNFRFSEDH. Residues 153-173 form a helical membrane-spanning segment; that stretch reads AIMGLAFTWVMASACAVPPLV. Topologically, residues 174-202 are extracellular; it reads GWSRYIPEGMQCSCGIDYYTRAEGFNNES. N-linked (GlcNAc...) asparagine glycosylation occurs at asparagine 200. A helical transmembrane segment spans residues 203-224; sequence FVIYMFVCHFLIPLVVVFFCYG. Residues 225 to 252 lie on the Cytoplasmic side of the membrane; it reads RLLCAVKEAAAAQQESETTQRAEREVSR. A helical membrane pass occupies residues 253-274; it reads MVVIMVVAFLVCWCPYAGVAWY. Topologically, residues 275-286 are extracellular; that stretch reads IFTHQGSEFGPL. A helical membrane pass occupies residues 287 to 308; it reads FMTFPAFFAKSSSIYNPMIYIC. An N6-(retinylidene)lysine modification is found at lysine 296. Residues 309–353 lie on the Cytoplasmic side of the membrane; the sequence is MNKQFRHCMITTLCCGKNPFEEEEGASTTSKTEASSVSSSSVSPA. 2 S-palmitoyl cysteine lipidation sites follow: cysteine 322 and cysteine 323. A disordered region spans residues 330–353; it reads EEEGASTTSKTEASSVSSSSVSPA. Positions 334–353 are enriched in low complexity; the sequence is ASTTSKTEASSVSSSSVSPA.

Belongs to the G-protein coupled receptor 1 family. Opsin subfamily. Post-translationally, phosphorylated on some or all of the serine and threonine residues present in the C-terminal region. In terms of processing, contains one covalently linked retinal chromophore.

The protein localises to the membrane. The protein resides in the cell projection. It localises to the cilium. Its subcellular location is the photoreceptor outer segment. Photoreceptor required for image-forming vision at low light intensity. While most salt water fish species use retinal as chromophore, most freshwater fish use 3-dehydroretinal, or a mixture of retinal and 3-dehydroretinal. Light-induced isomerization of 11-cis to all-trans retinal triggers a conformational change that activates signaling via G-proteins. Subsequent receptor phosphorylation mediates displacement of the bound G-protein alpha subunit by arrestin and terminates signaling. This is Rhodopsin (rho) from Chelon labrosus (Thicklip grey mullet).